Consider the following 176-residue polypeptide: MVTIALGSKNPVKINATKEALDVLKLNWDLIGIEVDSGVDKQPFCDQTYVGARNRALNVIRVTNADIGLGIEGGVCNVYGKFIANAVVYVITKEGLENFAISSSFTLPSSMVSLILQGKELGEASDIIFKTNNSKTKEGAIGLLTNNVINRKMLYVQPIVLALYPIYNTMINNTPF.

D36 serves as a coordination point for Mg(2+).

This sequence belongs to the YjjX NTPase family. As to quaternary structure, homodimer. It depends on Mg(2+) as a cofactor. Mn(2+) is required as a cofactor.

It carries out the reaction XTP + H2O = XDP + phosphate + H(+). It catalyses the reaction ITP + H2O = IDP + phosphate + H(+). Its function is as follows. Phosphatase that hydrolyzes non-canonical purine nucleotides such as XTP and ITP to their respective diphosphate derivatives. Probably excludes non-canonical purines from DNA/RNA precursor pool, thus preventing their incorporation into DNA/RNA and avoiding chromosomal lesions. This is Probable inosine/xanthosine triphosphatase from Saccharolobus islandicus (strain Y.G.57.14 / Yellowstone #1) (Sulfolobus islandicus).